Reading from the N-terminus, the 305-residue chain is GTP cyclohydrolase FolE2 (305 aa).

This sequence belongs to the GTP cyclohydrolase IV family.

The catalysed reaction is GTP + H2O = 7,8-dihydroneopterin 3'-triphosphate + formate + H(+). It participates in cofactor biosynthesis; 7,8-dihydroneopterin triphosphate biosynthesis; 7,8-dihydroneopterin triphosphate from GTP: step 1/1. Functionally, converts GTP to 7,8-dihydroneopterin triphosphate. The polypeptide is GTP cyclohydrolase FolE2 (Xanthomonas axonopodis pv. citri (strain 306)).